A 489-amino-acid chain; its full sequence is Bifunctional protein HldE (489 aa).

Positions 1 to 330 are ribokinase; that stretch reads MFDFDGLSNA…RKILPPAFLA (330 aa). 205-208 contributes to the ATP binding site; the sequence is NRKE. D275 is an active-site residue. The interval 358–489 is cytidylyltransferase; that stretch reads FTNGCFDILH…SLVKRAGGRA (132 aa).

This sequence in the N-terminal section; belongs to the carbohydrate kinase PfkB family. In the C-terminal section; belongs to the cytidylyltransferase family. Homodimer.

It carries out the reaction D-glycero-beta-D-manno-heptose 7-phosphate + ATP = D-glycero-beta-D-manno-heptose 1,7-bisphosphate + ADP + H(+). It catalyses the reaction D-glycero-beta-D-manno-heptose 1-phosphate + ATP + H(+) = ADP-D-glycero-beta-D-manno-heptose + diphosphate. Its pathway is nucleotide-sugar biosynthesis; ADP-L-glycero-beta-D-manno-heptose biosynthesis; ADP-L-glycero-beta-D-manno-heptose from D-glycero-beta-D-manno-heptose 7-phosphate: step 1/4. The protein operates within nucleotide-sugar biosynthesis; ADP-L-glycero-beta-D-manno-heptose biosynthesis; ADP-L-glycero-beta-D-manno-heptose from D-glycero-beta-D-manno-heptose 7-phosphate: step 3/4. Its function is as follows. Catalyzes the phosphorylation of D-glycero-D-manno-heptose 7-phosphate at the C-1 position to selectively form D-glycero-beta-D-manno-heptose-1,7-bisphosphate. Catalyzes the ADP transfer from ATP to D-glycero-beta-D-manno-heptose 1-phosphate, yielding ADP-D-glycero-beta-D-manno-heptose. This Nitrobacter hamburgensis (strain DSM 10229 / NCIMB 13809 / X14) protein is Bifunctional protein HldE.